Here is an 804-residue protein sequence, read N- to C-terminus: Ribonucleoside-diphosphate reductase large subunit-like protein (804 aa).

It belongs to the ribonucleoside diphosphate reductase large chain family. In terms of assembly, the genome of human herpesvirus-6 does not code for a ribonucleotide reductase small subunit.

It is found in the virion. The protein resides in the host cytoplasm. Functionally, does not possess a ribonucleotide reductase activity. Betaherpesviruses probably use another strategy to expand the dNTP pool in a quiescent host cell. The sequence is that of Ribonucleoside-diphosphate reductase large subunit-like protein from Human herpesvirus 6B (strain Z29) (HHV-6 variant B).